The sequence spans 259 residues: Early E4 30 kDa protein (259 aa).

It belongs to the adenoviridae E4 30 to 34 kDa protein family. Interacts with E1B-55k.

Its subcellular location is the host nucleus. It is found in the host cytoplasm. Functionally, plays a major role to prevent cellular inhibition of viral genome replication by nuclear bodies. Assembles an SCF-like E3 ubiquitin ligase complex based on the cellular proteins ELOB, ELOC, CUL5 and RBX1, in cooperation with viral E1B-55K. This viral RING-type ligase ubiquitinates cellular substrates prior to proteasomal degradation: p53/TP53, LIG4, MRE11-RAD50-NBS1 (MRN) complex, ITGA3, DAXX and BLM. The chain is Early E4 30 kDa protein from Canine adenovirus serotype 2 (strain Toronto A 26-61) (CAdV-2).